The chain runs to 171 residues: ATP synthase subunit b (171 aa).

A helical membrane pass occupies residues 2-22; it reads FVVKMVLGFLILLSPLCATGL.

This sequence belongs to the ATPase B chain family. F-type ATPases have 2 components, F(1) - the catalytic core - and F(0) - the membrane proton channel. F(1) has five subunits: alpha(3), beta(3), gamma(1), delta(1), epsilon(1). F(0) has three main subunits: a(1), b(2) and c(10-14). The alpha and beta chains form an alternating ring which encloses part of the gamma chain. F(1) is attached to F(0) by a central stalk formed by the gamma and epsilon chains, while a peripheral stalk is formed by the delta and b chains.

The protein resides in the cell inner membrane. F(1)F(0) ATP synthase produces ATP from ADP in the presence of a proton or sodium gradient. F-type ATPases consist of two structural domains, F(1) containing the extramembraneous catalytic core and F(0) containing the membrane proton channel, linked together by a central stalk and a peripheral stalk. During catalysis, ATP synthesis in the catalytic domain of F(1) is coupled via a rotary mechanism of the central stalk subunits to proton translocation. Functionally, component of the F(0) channel, it forms part of the peripheral stalk, linking F(1) to F(0). This chain is ATP synthase subunit b, found in Helicobacter pylori (strain J99 / ATCC 700824) (Campylobacter pylori J99).